The sequence spans 319 residues: Transmembrane and ubiquitin-like domain-containing protein 2 (319 aa).

Residues Val36–Thr56 form a helical membrane-spanning segment. Disordered regions lie at residues Val88–Glu130 and Gln146–Cys165. Residues Pro95–Glu111 show a composition bias toward basic and acidic residues. The Ubiquitin-like domain maps to Ile173–Ala246. Helical transmembrane passes span Leu264–Trp284 and Phe293–Val313.

Its subcellular location is the membrane. In Rattus norvegicus (Rat), this protein is Transmembrane and ubiquitin-like domain-containing protein 2 (Tmub2).